The primary structure comprises 89 residues: Small ribosomal subunit protein uS15 (89 aa).

Belongs to the universal ribosomal protein uS15 family. Part of the 30S ribosomal subunit. Forms a bridge to the 50S subunit in the 70S ribosome, contacting the 23S rRNA.

One of the primary rRNA binding proteins, it binds directly to 16S rRNA where it helps nucleate assembly of the platform of the 30S subunit by binding and bridging several RNA helices of the 16S rRNA. Functionally, forms an intersubunit bridge (bridge B4) with the 23S rRNA of the 50S subunit in the ribosome. In Mycobacterium leprae (strain Br4923), this protein is Small ribosomal subunit protein uS15.